The chain runs to 292 residues: 4-hydroxy-tetrahydrodipicolinate synthase (292 aa).

Thr46 contributes to the pyruvate binding site. The Proton donor/acceptor role is filled by Tyr134. The Schiff-base intermediate with substrate role is filled by Lys162. Ile204 contributes to the pyruvate binding site.

It belongs to the DapA family. In terms of assembly, homotetramer; dimer of dimers.

The protein resides in the cytoplasm. It carries out the reaction L-aspartate 4-semialdehyde + pyruvate = (2S,4S)-4-hydroxy-2,3,4,5-tetrahydrodipicolinate + H2O + H(+). It participates in amino-acid biosynthesis; L-lysine biosynthesis via DAP pathway; (S)-tetrahydrodipicolinate from L-aspartate: step 3/4. Catalyzes the condensation of (S)-aspartate-beta-semialdehyde [(S)-ASA] and pyruvate to 4-hydroxy-tetrahydrodipicolinate (HTPA). The polypeptide is 4-hydroxy-tetrahydrodipicolinate synthase (Moorella thermoacetica (strain ATCC 39073 / JCM 9320)).